A 283-amino-acid polypeptide reads, in one-letter code: Ribosomal RNA small subunit methyltransferase I (283 aa).

The protein belongs to the methyltransferase superfamily. RsmI family.

The protein resides in the cytoplasm. The enzyme catalyses cytidine(1402) in 16S rRNA + S-adenosyl-L-methionine = 2'-O-methylcytidine(1402) in 16S rRNA + S-adenosyl-L-homocysteine + H(+). In terms of biological role, catalyzes the 2'-O-methylation of the ribose of cytidine 1402 (C1402) in 16S rRNA. The protein is Ribosomal RNA small subunit methyltransferase I of Haemophilus influenzae (strain ATCC 51907 / DSM 11121 / KW20 / Rd).